The chain runs to 543 residues: MAAAAAGAASAELVIGWCIFGLLLLAILAFCWIYVRKYQSQRESEVVSTITAIFSLAIALITSALLPVDIFLVSYMKNQNGTFKDWANGNVSRQIEDTVLYGYYTLYSVILFCVFFWIPFVYFYYEEKDDDDTGKCTQVKMALKYTLGFVVICALLLLVGAFVPLNLPDNKNSTEWEKVKFLFEELGSSHGLAALSFSISSLTLVGMLAAIIYTAYGMSALPLNLIKGTRNAAYERLENTEDIEEVEQHIQTIKSKSKDGRPLPARDRRALKQFEERLRTLRKRERRLEFIENSWWTKFCGALRPLKIIWGIFFIFVALLFVISLFLSNLDKALHSAGIDSGFIIFGANLSNPLNMLLPLLQTVFPLDYILITIIIMYFIFTSMAGIRNIGIWFFWIRLYKIRRGRTRPQALLFLCMILLLIVLHTSYMIYSLAPQYVMYGSQNYLIESNMTYNDHRGNSSLSVPKRCDADAPEDQCTVTRTYLFLHKFWFFSAAYYFGNWAFLGVFIVGFIVSCCKGKKSVLERVDEDDSDLSDDEPSLYSV.

The Extracellular portion of the chain corresponds to 1-12 (MAAAAAGAASAE). The helical transmembrane segment at 13-33 (LVIGWCIFGLLLLAILAFCWI) threads the bilayer. Residues 34–52 (YVRKYQSQRESEVVSTITA) lie on the Cytoplasmic side of the membrane. A helical transmembrane segment spans residues 53 to 73 (IFSLAIALITSALLPVDIFLV). The Extracellular segment spans residues 74-102 (SYMKNQNGTFKDWANGNVSRQIEDTVLYG). N-linked (GlcNAc...) asparagine glycosylation is found at asparagine 80 and asparagine 90. A helical transmembrane segment spans residues 103-123 (YYTLYSVILFCVFFWIPFVYF). At 124-146 (YYEEKDDDDTGKCTQVKMALKYT) the chain is on the cytoplasmic side. Residues 147–167 (LGFVVICALLLLVGAFVPLNL) form a helical membrane-spanning segment. The Extracellular segment spans residues 168 to 190 (PDNKNSTEWEKVKFLFEELGSSH). N-linked (GlcNAc...) asparagine glycosylation is present at asparagine 172. A helical membrane pass occupies residues 191–211 (GLAALSFSISSLTLVGMLAAI). At 212-307 (IYTAYGMSAL…KFCGALRPLK (96 aa)) the chain is on the cytoplasmic side. Residues 234-237 (YERL) carry the YERL motif; mediates interaction with adapter protein complex 2 and is essential for its function in clathrin-mediated endocytosis of INSR motif. Threonine 240 is subject to Phosphothreonine. Residues 296 to 299 (WTKF) carry the WTKF motif; mediates interaction with adapter protein complex 2 and is essential for its function in clathrin-mediated endocytosis of INSR motif. A helical transmembrane segment spans residues 308 to 328 (IIWGIFFIFVALLFVISLFLS). The Extracellular portion of the chain corresponds to 329 to 366 (NLDKALHSAGIDSGFIIFGANLSNPLNMLLPLLQTVFP). The N-linked (GlcNAc...) asparagine glycan is linked to asparagine 349. Residues 367-387 (LDYILITIIIMYFIFTSMAGI) traverse the membrane as a helical segment. Topologically, residues 388–410 (RNIGIWFFWIRLYKIRRGRTRPQ) are cytoplasmic. A helical transmembrane segment spans residues 411–431 (ALLFLCMILLLIVLHTSYMIY). The Extracellular segment spans residues 432–488 (SLAPQYVMYGSQNYLIESNMTYNDHRGNSSLSVPKRCDADAPEDQCTVTRTYLFLHK). Residues asparagine 450 and asparagine 459 are each glycosylated (N-linked (GlcNAc...) asparagine). The helical transmembrane segment at 489–509 (FWFFSAAYYFGNWAFLGVFIV) threads the bilayer. Residues 510–543 (GFIVSCCKGKKSVLERVDEDDSDLSDDEPSLYSV) are Cytoplasmic-facing. Phosphoserine occurs at positions 531 and 534.

It belongs to the LIMR family. LMBRD1 subfamily. Interacts with ABCD4; this interaction induces the translocation of ABCD4 from the endoplasmic reticulum to the lysosome. Interacts with ABCD4 and MMACHC; this interaction ensures the transport of cobalamin from the lysosome to the cytoplasm. Interacts with INSR, adapter protein complex 2 and clathrin heavy chain. In terms of processing, N-glycosylated.

It is found in the endoplasmic reticulum membrane. The protein resides in the lysosome membrane. The protein localises to the cell membrane. Its subcellular location is the cytoplasmic vesicle. It localises to the clathrin-coated vesicle. In terms of biological role, lysosomal membrane chaperone required to export cobalamin (vitamin B12) from the lysosome to the cytosol, allowing its conversion to cofactors. Targets ABCD4 transporter from the endoplasmic reticulum to the lysosome. Then forms a complex with lysosomal ABCD4 and cytoplasmic MMACHC to transport cobalamin across the lysosomal membrane. Acts as an adapter protein which plays an important role in mediating and regulating the internalization of the insulin receptor (INSR). Involved in clathrin-mediated endocytosis of INSR via its interaction with adapter protein complex 2. Essential for the initiation of gastrulation and early formation of mesoderm structures during embryogenesis. This Bos taurus (Bovine) protein is Lysosomal cobalamin transport escort protein LMBD1 (LMBRD1).